Here is a 1128-residue protein sequence, read N- to C-terminus: Adipocyte enhancer-binding protein 1 (1128 aa).

An N-terminal signal peptide occupies residues 1–25 (MAAVRTASLLCGLLALLALCPEGSP). Residues 40–368 (GFLSEFETQS…PRKGEELEEE (329 aa)) form a disordered region. The segment covering 77–109 (PRADAEAPPEKNKDKEKKGKKDKGPKAAKHLEG) has biased composition (basic and acidic residues). Basic residues predominate over residues 113 to 163 (PTKKPKEKPPKATKKPKEKPPKATKKPKEKPPKATKKPKEKPPKATKRPSA). 2 stretches are compositionally biased toward polar residues: residues 178 to 187 (RSLTSPSNPG) and 198 to 209 (TSLNTWQGQGEE). Over residues 249–261 (RQKQPRPTPSRKR) the composition is skewed to basic residues. Basic and acidic residues-rich tracts occupy residues 267–282 (PEEK…EVDP) and 327–363 (EELK…RKGE). One can recognise an F5/8 type C domain in the interval 375–532 (IKCPPIGMES…LCMRLEVLGC (158 aa)). The interval 382–547 (MESHRIEDNQ…YSYYAQNEVV (166 aa)) is required for DNA-binding and interaction with NFKBIA. Interaction with MAPK1 and MAPK3 stretches follow at residues 413–616 (AGAN…TAGM) and 998–1128 (DPSR…FGDF). N520 carries an N-linked (GlcNAc...) asparagine glycan. The segment at 547–977 (VTTDSLDFRH…TQCNFILARS (431 aa)) is interaction with PTEN. The Peptidase M14 domain maps to 555–896 (RHHSYKDMRQ…EALLTFMEQV (342 aa)). Residues 933-1128 (DYWRILNPGE…ETYTVNFGDF (196 aa)) form a required for transcriptional repression region. Residues 1027–1056 (LRRLNSTTGPATSPTPALTLPPSPTPGSTS) are disordered. Positions 1030–1044 (LNSTTGPATSPTPAL) are enriched in low complexity.

Belongs to the peptidase M14 family. As to quaternary structure, interacts with different types of collagen, including collagens I, III, and V. Interacts with GNG5, NFKBIA, MAPK1, MAPK3 and PTEN. May interact with calmodulin. Interaction with MAPK1 may stimulate DNA-binding. Binds to DNA in vitro. Post-translationally, phosphorylated by MAPK1 in vitro. As to expression, expressed in aorta.

Its subcellular location is the secreted. As a positive regulator of collagen fibrillogenesis, it is probably involved in the organization and remodeling of the extracellular matrix. May positively regulate MAP-kinase activity in adipocytes, leading to enhanced adipocyte proliferation and reduced adipocyte differentiation. May also positively regulate NF-kappa-B activity in macrophages by promoting the phosphorylation and subsequent degradation of I-kappa-B-alpha (NFKBIA), leading to enhanced macrophage inflammatory responsiveness. Can act as a transcriptional repressor. The sequence is that of Adipocyte enhancer-binding protein 1 (Aebp1) from Rattus norvegicus (Rat).